Here is a 111-residue protein sequence, read N- to C-terminus: MASAVLSASRVSRPLGRALPGLRRPMSSGAHGEEGSARMWKALTYFVALPGVGVSMLNVFLKSRHEEHERPPFVAYPHLRIRTKPFPWGDGNHTLFHNPHVNPLPTGYEDE.

Residues 1 to 26 (MASAVLSASRVSRPLGRALPGLRRPM) constitute a mitochondrion transit peptide. The Mitochondrial matrix segment spans residues 27 to 36 (SSGAHGEEGS). Residues 37-61 (ARMWKALTYFVALPGVGVSMLNVFL) form a helical membrane-spanning segment. Residues 62 to 111 (KSRHEEHERPPFVAYPHLRIRTKPFPWGDGNHTLFHNPHVNPLPTGYEDE) lie on the Mitochondrial intermembrane side of the membrane.

The protein belongs to the cytochrome c oxidase subunit 6A family. Component of the cytochrome c oxidase (complex IV, CIV), a multisubunit enzyme composed of 14 subunits. The complex is composed of a catalytic core of 3 subunits MT-CO1, MT-CO2 and MT-CO3, encoded in the mitochondrial DNA, and 11 supernumerary subunits COX4I, COX5A, COX5B, COX6A, COX6B, COX6C, COX7A, COX7B, COX7C, COX8 and NDUFA4, which are encoded in the nuclear genome. The complex exists as a monomer or a dimer and forms supercomplexes (SCs) in the inner mitochondrial membrane with NADH-ubiquinone oxidoreductase (complex I, CI) and ubiquinol-cytochrome c oxidoreductase (cytochrome b-c1 complex, complex III, CIII), resulting in different assemblies (supercomplex SCI(1)III(2)IV(1) and megacomplex MCI(2)III(2)IV(2)).

It localises to the mitochondrion inner membrane. It participates in energy metabolism; oxidative phosphorylation. Functionally, component of the cytochrome c oxidase, the last enzyme in the mitochondrial electron transport chain which drives oxidative phosphorylation. The respiratory chain contains 3 multisubunit complexes succinate dehydrogenase (complex II, CII), ubiquinol-cytochrome c oxidoreductase (cytochrome b-c1 complex, complex III, CIII) and cytochrome c oxidase (complex IV, CIV), that cooperate to transfer electrons derived from NADH and succinate to molecular oxygen, creating an electrochemical gradient over the inner membrane that drives transmembrane transport and the ATP synthase. Cytochrome c oxidase is the component of the respiratory chain that catalyzes the reduction of oxygen to water. Electrons originating from reduced cytochrome c in the intermembrane space (IMS) are transferred via the dinuclear copper A center (CU(A)) of subunit 2 and heme A of subunit 1 to the active site in subunit 1, a binuclear center (BNC) formed by heme A3 and copper B (CU(B)). The BNC reduces molecular oxygen to 2 water molecules unsing 4 electrons from cytochrome c in the IMS and 4 protons from the mitochondrial matrix. This Mus musculus (Mouse) protein is Cytochrome c oxidase subunit 6A1, mitochondrial (Cox6a1).